The following is an 84-amino-acid chain: Exodeoxyribonuclease 7 small subunit (84 aa).

The protein belongs to the XseB family. In terms of assembly, heterooligomer composed of large and small subunits.

Its subcellular location is the cytoplasm. The enzyme catalyses Exonucleolytic cleavage in either 5'- to 3'- or 3'- to 5'-direction to yield nucleoside 5'-phosphates.. Its function is as follows. Bidirectionally degrades single-stranded DNA into large acid-insoluble oligonucleotides, which are then degraded further into small acid-soluble oligonucleotides. This Yersinia pseudotuberculosis serotype O:3 (strain YPIII) protein is Exodeoxyribonuclease 7 small subunit.